We begin with the raw amino-acid sequence, 359 residues long: Fructose-bisphosphate aldolase class 2 (359 aa).

D-glyceraldehyde 3-phosphate is bound at residue Ser62. Residue Asp110 is the Proton donor of the active site. Zn(2+)-binding residues include His111, Asp145, Glu175, and His227. Gly228 is a dihydroxyacetone phosphate binding site. His265 serves as a coordination point for Zn(2+). Dihydroxyacetone phosphate contacts are provided by residues 266 to 268 (GGS) and 287 to 290 (NIDT).

This sequence belongs to the class II fructose-bisphosphate aldolase family. Requires Zn(2+) as cofactor.

The enzyme catalyses beta-D-fructose 1,6-bisphosphate = D-glyceraldehyde 3-phosphate + dihydroxyacetone phosphate. It participates in carbohydrate degradation; glycolysis; D-glyceraldehyde 3-phosphate and glycerone phosphate from D-glucose: step 4/4. Catalyzes the aldol condensation of dihydroxyacetone phosphate (DHAP or glycerone-phosphate) with glyceraldehyde 3-phosphate (G3P) to form fructose 1,6-bisphosphate (FBP) in gluconeogenesis and the reverse reaction in glycolysis. This Buchnera aphidicola subsp. Baizongia pistaciae (strain Bp) protein is Fructose-bisphosphate aldolase class 2 (fbaA).